A 178-amino-acid chain; its full sequence is GTP-dependent dephospho-CoA kinase (178 aa).

GTP-binding residues include Asp55, Val57, Asp74, Lys76, and Glu127.

It belongs to the GTP-dependent DPCK family.

It catalyses the reaction 3'-dephospho-CoA + GTP = GDP + CoA + H(+). The protein operates within cofactor biosynthesis; coenzyme A biosynthesis. In terms of biological role, catalyzes the GTP-dependent phosphorylation of the 3'-hydroxyl group of dephosphocoenzyme A to form coenzyme A (CoA). The polypeptide is GTP-dependent dephospho-CoA kinase (Saccharolobus islandicus (strain Y.G.57.14 / Yellowstone #1) (Sulfolobus islandicus)).